A 269-amino-acid chain; its full sequence is Diaminopimelate epimerase (269 aa).

Positions 15, 49, and 66 each coordinate substrate. The Proton donor role is filled by Cys75. Substrate is bound by residues Gly76–Asn77, Asn155, Asn187, and Glu204–Arg205. Residue Cys213 is the Proton acceptor of the active site. Gly214–Ser215 serves as a coordination point for substrate.

The protein belongs to the diaminopimelate epimerase family. Homodimer.

The protein resides in the cytoplasm. It catalyses the reaction (2S,6S)-2,6-diaminopimelate = meso-2,6-diaminopimelate. The protein operates within amino-acid biosynthesis; L-lysine biosynthesis via DAP pathway; DL-2,6-diaminopimelate from LL-2,6-diaminopimelate: step 1/1. Functionally, catalyzes the stereoinversion of LL-2,6-diaminopimelate (L,L-DAP) to meso-diaminopimelate (meso-DAP), a precursor of L-lysine and an essential component of the bacterial peptidoglycan. This is Diaminopimelate epimerase from Rickettsia canadensis (strain McKiel).